The chain runs to 63 residues: uncharacterized protein (63 aa).

A run of 2 helical transmembrane segments spans residues 3–23 (VFLI…VYYI) and 42–62 (ALVC…TKLL).

Its subcellular location is the cell membrane. This is an uncharacterized protein from Bacillus subtilis (strain 168).